Here is a 299-residue protein sequence, read N- to C-terminus: 4-diphosphocytidyl-2-C-methyl-D-erythritol kinase (299 aa).

Residue K20 is part of the active site. 106 to 116 lines the ATP pocket; the sequence is PMGGGLGGGSS. Residue D148 is part of the active site.

The protein belongs to the GHMP kinase family. IspE subfamily. Homodimer.

It carries out the reaction 4-CDP-2-C-methyl-D-erythritol + ATP = 4-CDP-2-C-methyl-D-erythritol 2-phosphate + ADP + H(+). It participates in isoprenoid biosynthesis; isopentenyl diphosphate biosynthesis via DXP pathway; isopentenyl diphosphate from 1-deoxy-D-xylulose 5-phosphate: step 3/6. Catalyzes the phosphorylation of the position 2 hydroxy group of 4-diphosphocytidyl-2C-methyl-D-erythritol. This chain is 4-diphosphocytidyl-2-C-methyl-D-erythritol kinase, found in Yersinia pseudotuberculosis serotype O:1b (strain IP 31758).